Reading from the N-terminus, the 480-residue chain is Membrane-bound lytic murein transglycosylase F (480 aa).

The signal sequence occupies residues 1-15; that stretch reads MKKLLFVLLTITLLA. Residues 16–259 are non-LT domain; the sequence is SCQKVSVEQT…HLNEKYFAHV (244 aa). Residues 260-480 form an LT domain region; it reads KRFDYVDTRA…QENLSGAQPQ (221 aa). E304 is a catalytic residue.

The protein in the N-terminal section; belongs to the bacterial solute-binding protein 3 family. It in the C-terminal section; belongs to the transglycosylase Slt family.

It is found in the cell outer membrane. It catalyses the reaction Exolytic cleavage of the (1-&gt;4)-beta-glycosidic linkage between N-acetylmuramic acid (MurNAc) and N-acetylglucosamine (GlcNAc) residues in peptidoglycan, from either the reducing or the non-reducing ends of the peptidoglycan chains, with concomitant formation of a 1,6-anhydrobond in the MurNAc residue.. Murein-degrading enzyme that degrades murein glycan strands and insoluble, high-molecular weight murein sacculi, with the concomitant formation of a 1,6-anhydromuramoyl product. Lytic transglycosylases (LTs) play an integral role in the metabolism of the peptidoglycan (PG) sacculus. Their lytic action creates space within the PG sacculus to allow for its expansion as well as for the insertion of various structures such as secretion systems and flagella. In Shewanella sediminis (strain HAW-EB3), this protein is Membrane-bound lytic murein transglycosylase F.